A 110-amino-acid polypeptide reads, in one-letter code: MAQAAQINVLDISTRLRVEHDKKRRQFSIRLNGSHDKAVLLYEYVGKKTVDLQHTEVPEAYRGREIAKHLAKAAMDFVVEEDLKAHLTCWYIQKFVKENPHPQYLERILH.

The region spanning 19–109 (EHDKKRRQFS…PHPQYLERIL (91 aa)) is the N-acetyltransferase domain.

This sequence belongs to the NATD1 family.

The sequence is that of Protein NATD1 (natd1) from Danio rerio (Zebrafish).